A 658-amino-acid chain; its full sequence is Secretin XcpQ (658 aa).

Residues 1–34 form the signal peptide; it reads MSQPLLRALFAPSSRSYVPAVLLSLALGIQAAHA. The N0 stretch occupies residues 51–141; that stretch reads AHWTINLKDA…TEAGGGQSAP (91 aa). The interval 142 to 205 is N1; the sequence is DRLETRVIQV…DVIRQLDQKG (64 aa). Residues 206–279 form an N2 region; it reads SHDYSVINLR…SLDTPTARSA (74 aa). An N3 region spans residues 280–365; it reads NTRVIRLRHN…VPRAQVLVEA (86 aa). Residues 302 to 322 form a disordered region; it reads SEGMKNNGGQGGEQTGGGRPS. Gly residues predominate over residues 307–320; sequence NNGGQGGEQTGGGR. Residues 368–606 form a secretin region; sequence VEISGDIQDA…VFLRPTVVRD (239 aa). The segment at 608-658 is s domain; sequence AGLAALSGKKYSDIRVIDGTRGPEGRPSILPTNANQLFDGQAVDLRELMTE.

It belongs to the bacterial secretin family. GSP D subfamily. In terms of assembly, forms a cylindrical channel with 15 subunits. The closed pentadecameric channel is 170 Angstroms long and 140 Angstroms in diameter.

The protein localises to the cell outer membrane. Involved in a type II secretion system (T2SS, formerly general secretion pathway, GSP) for the export of proteins. This subunit forms the outer membrane channel. Among its substrates are PrpL, elastase LasB, chitin binding protein D (CbpD), aminopeptidase PaAP, and metalloprotease ImpA. This is Secretin XcpQ from Pseudomonas aeruginosa (strain ATCC 15692 / DSM 22644 / CIP 104116 / JCM 14847 / LMG 12228 / 1C / PRS 101 / PAO1).